The chain runs to 309 residues: Prephenate dehydratase (309 aa).

One can recognise a Prephenate dehydratase domain in the interval Gly-3 to Cys-191. The ACT domain maps to Ser-205–Pro-282.

In terms of assembly, homodimer.

The catalysed reaction is prephenate + H(+) = 3-phenylpyruvate + CO2 + H2O. It functions in the pathway amino-acid biosynthesis; L-phenylalanine biosynthesis; phenylpyruvate from prephenate: step 1/1. In Mycolicibacterium gilvum (strain PYR-GCK) (Mycobacterium gilvum (strain PYR-GCK)), this protein is Prephenate dehydratase (pheA).